Consider the following 485-residue polypeptide: WAS/WASL-interacting protein family member 3 (485 aa).

Positions 1–41 are enriched in pro residues; sequence MPVPPPPPPPPPPPPPPPPPLGAPPPPPLGAPPPPPPPGPP. A disordered region spans residues 1-485; the sequence is MPVPPPPPPP…QLSLKALPVR (485 aa). 3 short sequence motifs (profilin-binding motif) span residues 3 to 8, 11 to 16, and 31 to 36; these read VPPPPP, PPPPPP, and APPPPP. The region spanning 56 to 73 is the WH2 domain; sequence GRSALLADIQQGTRLRKV. Arg57 bears the Asymmetric dimethylarginine mark. An RLRK motif is present at residues 69-72; sequence RLRK. The residue at position 161 (Ser161) is a Phosphoserine. Residues 176 to 203 show a composition bias toward pro residues; that stretch reads PVPPRPSVPAPPPPTPPPPPPPPLPPAS. Ser211 carries the post-translational modification Phosphoserine. Over residues 212–246 the composition is skewed to pro residues; sequence PPAPPTKVNPSVVPPPLPCAPPLPPPPPTPPPLPP. The span at 247–262 shows a compositional bias: low complexity; sequence ASALSDKAVRPQLAPL. 2 stretches are compositionally biased toward pro residues: residues 263–278 and 296–312; these read HLPPIPPPLPLLPPCG and PPAPPPPPPPPPPPPLP. Phosphoserine is present on Ser392. The span at 392–405 shows a compositional bias: polar residues; it reads SPTTELSSKSQQPG. Residues 415–439 show a composition bias toward basic and acidic residues; that stretch reads AIDDFESKFTFHSMEDFPPPDEYKP. The WASP-binding motif motif lies at 424–448; sequence TFHSMEDFPPPDEYKPCQKIYPSKV.

As to quaternary structure, interacts with WASL, and monomeric and filamentous actin. As to expression, isoform 1 is expressed in brain and testis and isoform 2 is expressed only in brain (at protein level).

It localises to the cytoplasm. Functionally, may be a regulator of cytoskeletal organization (Potential). May have a role in spermatogenesis. This is WAS/WASL-interacting protein family member 3 (Wipf3) from Mus musculus (Mouse).